The following is a 318-amino-acid chain: Pantothenate kinase (318 aa).

96-103 provides a ligand contact to ATP; sequence GSVSVGKS.

This sequence belongs to the prokaryotic pantothenate kinase family.

The protein localises to the cytoplasm. The enzyme catalyses (R)-pantothenate + ATP = (R)-4'-phosphopantothenate + ADP + H(+). The protein operates within cofactor biosynthesis; coenzyme A biosynthesis; CoA from (R)-pantothenate: step 1/5. The protein is Pantothenate kinase of Bradyrhizobium sp. (strain BTAi1 / ATCC BAA-1182).